A 91-amino-acid polypeptide reads, in one-letter code: Probable insulin-like peptide gamma-type 1 (91 aa).

An N-terminal signal peptide occupies residues 1–26 (MSSYRQTLFILIILIVIILFVNEGQG). 3 cysteine pairs are disulfide-bonded: cysteine 37–cysteine 66, cysteine 49–cysteine 79, and cysteine 65–cysteine 70.

Belongs to the insulin family.

Its subcellular location is the secreted. This is Probable insulin-like peptide gamma-type 1 (ins-11) from Caenorhabditis elegans.